Reading from the N-terminus, the 115-residue chain is Probable non-functional T cell receptor beta variable 7-3 (115 aa).

Positions 1 to 21 (MGTRLLCWAALCLLGADHTGA) are cleaved as a signal peptide. Residues 22 to 115 (GVSQTPSNKV…SAAYLRASSL (94 aa)) enclose the Ig-like domain.

In terms of assembly, most probably, the alpha-beta TR is not assembled due to incorrect folding of the beta chain. Alpha-beta TR is a heterodimer composed of an alpha and beta chain; disulfide-linked. The alpha-beta TR is associated with the transmembrane signaling CD3 coreceptor proteins to form the TR-CD3 (TcR or TCR). The assembly of alpha-beta TR heterodimers with CD3 occurs in the endoplasmic reticulum where a single alpha-beta TR heterodimer associates with one CD3D-CD3E heterodimer, one CD3G-CD3E heterodimer and one CD247 homodimer forming a stable octameric structure. CD3D-CD3E and CD3G-CD3E heterodimers preferentially associate with TR alpha and TR beta chains, respectively. The association of the CD247 homodimer is the last step of TcR assembly in the endoplasmic reticulum and is required for transport to the cell surface.

It localises to the cell membrane. Its function is as follows. Probable non-functional open reading frame (ORF) of V region of the variable domain of T cell receptor (TR) beta chain. Non-functional ORF generally cannot participate in the synthesis of a productive T cell receptor (TR) chain due to altered V-(D)-J or switch recombination and/or splicing site (at mRNA level) and/or conserved amino acid change (protein level). Alpha-beta T cell receptors are antigen specific receptors which are essential to the immune response and are present on the cell surface of T lymphocytes. Recognize peptide-major histocompatibility (MH) (pMH) complexes that are displayed by antigen presenting cells (APC), a prerequisite for efficient T cell adaptive immunity against pathogens. Binding of alpha-beta TR to pMH complex initiates TR-CD3 clustering on the cell surface and intracellular activation of LCK that phosphorylates the ITAM motifs of CD3G, CD3D, CD3E and CD247 enabling the recruitment of ZAP70. In turn ZAP70 phosphorylates LAT, which recruits numerous signaling molecules to form the LAT signalosome. The LAT signalosome propagates signal branching to three major signaling pathways, the calcium, the mitogen-activated protein kinase (MAPK) kinase and the nuclear factor NF-kappa-B (NF-kB) pathways, leading to the mobilization of transcription factors that are critical for gene expression and essential for T cell growth and differentiation. The T cell repertoire is generated in the thymus, by V-(D)-J rearrangement. This repertoire is then shaped by intrathymic selection events to generate a peripheral T cell pool of self-MH restricted, non-autoaggressive T cells. Post-thymic interaction of alpha-beta TR with the pMH complexes shapes TR structural and functional avidity. In Homo sapiens (Human), this protein is Probable non-functional T cell receptor beta variable 7-3.